A 430-amino-acid polypeptide reads, in one-letter code: T-kininogen 2 (430 aa).

The N-terminal stretch at 1–18 (MKLITILLLCSRLLPSLA) is a signal peptide. Pyrrolidone carboxylic acid is present on Q19. Positions 28-131 (CNDETVFQAV…TQICNITPGK (104 aa)) constitute a Cystatin kininogen-type 1 domain. 9 disulfides stabilise this stretch: C28–C404, C83–C94, C107–C125, C141–C144, C205–C217, C228–C247, C263–C266, C327–C339, and C350–C369. A glycan (N-linked (GlcNAc...) asparagine) is linked at N82. Residues 150–253 (MDSSDLKPVL…SQSCDLYPGD (104 aa)) enclose the Cystatin kininogen-type 2 domain. Residues N168 and N204 are each glycosylated (N-linked (GlcNAc...) asparagine). The region spanning 272 to 375 (VDSPELKEAL…TVRCQALDMM (104 aa)) is the Cystatin kininogen-type 3 domain. N-linked (GlcNAc...) asparagine glycosylation occurs at N326. A disordered region spans residues 410 to 430 (LSKAGAGPAPDHQAEASTVTP).

In terms of processing, as T-kinin is preceded by a Met instead of an Arg or Lys, it is not released from its precursor by either tissue or plasma kallikrein. In terms of tissue distribution, plasma.

It localises to the secreted. Its subcellular location is the extracellular space. Its function is as follows. Kininogens are plasma glycoproteins with a number of functions: (1) as precursor of the active peptide bradykinin they effect smooth muscle contraction, induction of hypotension and increase of vascular permeability. (2) They play a role in blood coagulation by helping to position optimally prekallikrein and factor XI next to factor XII. (3) They are inhibitor of thiol proteases. The chain is T-kininogen 2 from Rattus norvegicus (Rat).